We begin with the raw amino-acid sequence, 689 residues long: Glycine--tRNA ligase beta subunit (689 aa).

This sequence belongs to the class-II aminoacyl-tRNA synthetase family. As to quaternary structure, tetramer of two alpha and two beta subunits.

The protein resides in the cytoplasm. The enzyme catalyses tRNA(Gly) + glycine + ATP = glycyl-tRNA(Gly) + AMP + diphosphate. The protein is Glycine--tRNA ligase beta subunit of Actinobacillus pleuropneumoniae serotype 3 (strain JL03).